A 185-amino-acid polypeptide reads, in one-letter code: Prenylated Rab acceptor protein 1 (185 aa).

The Cytoplasmic portion of the chain corresponds to 1 to 78 (MAAQKDQQKD…RNVEYYQSNY (78 aa)). A required for interaction with prenylated RAB3A and VAMP2 region spans residues 30–54 (AGREWLERRRATIRPWGTFVDQQRF). The next 2 helical transmembrane spans lie at 79 to 94 (VFVFLGLILYCVVTSP) and 95 to 112 (MLLVALAVFFGACYILYL). The Cytoplasmic segment spans residues 113 to 131 (RTLQSKLVLFGREVSPAHQ). Transmembrane regions (helical) follow at residues 132–148 (YALAGGVSFPFFWLAGA) and 149–165 (GSAVFWVLGATLVLIGS). Residues 165 to 185 (SHAAFHQIEPADGEELQMEPV) are required for interaction with GDI1. Residues 166–185 (HAAFHQIEPADGEELQMEPV) lie on the Cytoplasmic side of the membrane. The interval 175-185 (ADGEELQMEPV) is required for interaction with prenylated RAB3A and VAMP2. The homodimerization stretch occupies residues 175 to 185 (ADGEELQMEPV).

It belongs to the PRA1 family. As to quaternary structure, homodimers. Interacts specifically with both prenylated Rab proteins (including RAB3A and RAB1), and VAMP2 (synaptobrevin-2), in an exclusive way. Interacts with NDRG1. Interacts with free GDI1 in the absence of Rab proteins. Also interacts with PCLO. As to expression, ubiquitous.

Its subcellular location is the cell membrane. The protein localises to the cytoplasm. It localises to the golgi apparatus. The protein resides in the cytoplasmic vesicle. It is found in the secretory vesicle. Its subcellular location is the synaptic vesicle. General Rab protein regulator required for vesicle formation from the Golgi complex. May control vesicle docking and fusion by mediating the action of Rab GTPases to the SNARE complexes. In addition it inhibits the removal of Rab GTPases from the membrane by GDI1. This is Prenylated Rab acceptor protein 1 (Rabac1) from Rattus norvegicus (Rat).